A 122-amino-acid polypeptide reads, in one-letter code: Large ribosomal subunit protein bL12 (122 aa).

This sequence belongs to the bacterial ribosomal protein bL12 family. As to quaternary structure, homodimer. Part of the ribosomal stalk of the 50S ribosomal subunit. Forms a multimeric L10(L12)X complex, where L10 forms an elongated spine to which 2 to 4 L12 dimers bind in a sequential fashion. Binds GTP-bound translation factors.

Forms part of the ribosomal stalk which helps the ribosome interact with GTP-bound translation factors. Is thus essential for accurate translation. This chain is Large ribosomal subunit protein bL12, found in Mycoplasma capricolum subsp. capricolum (strain California kid / ATCC 27343 / NCTC 10154).